Here is a 96-residue protein sequence, read N- to C-terminus: Large ribosomal subunit protein eL43 (96 aa).

C41, C44, C59, and C62 together coordinate Zn(2+). A C4-type zinc finger spans residues 41–62 (CPVCAFPKLKRAGTSIWVCEKC).

This sequence belongs to the eukaryotic ribosomal protein eL43 family. Putative zinc-binding subfamily. As to quaternary structure, part of the 50S ribosomal subunit. Zn(2+) serves as cofactor.

Binds to the 23S rRNA. In Methanococcus maripaludis (strain DSM 14266 / JCM 13030 / NBRC 101832 / S2 / LL), this protein is Large ribosomal subunit protein eL43.